We begin with the raw amino-acid sequence, 536 residues long: Membrane protein insertase YidC (536 aa).

Residues 5 to 25 (ALIAVILSIVFFYGYSALFPP) traverse the membrane as a helical segment. A disordered region spans residues 30-54 (APAPSAQQAVTGSQPGAPQASVAAV). Residues 31–54 (PAPSAQQAVTGSQPGAPQASVAAV) show a composition bias toward low complexity. 4 consecutive transmembrane segments (helical) span residues 350–370 (YGIA…PLTH), 420–440 (LPML…MFSI), 454–474 (LAGK…MVIQ), and 494–514 (PVVF…YWLV).

Belongs to the OXA1/ALB3/YidC family. Type 1 subfamily. In terms of assembly, interacts with the Sec translocase complex via SecD. Specifically interacts with transmembrane segments of nascent integral membrane proteins during membrane integration.

The protein resides in the cell inner membrane. In terms of biological role, required for the insertion and/or proper folding and/or complex formation of integral membrane proteins into the membrane. Involved in integration of membrane proteins that insert both dependently and independently of the Sec translocase complex, as well as at least some lipoproteins. Aids folding of multispanning membrane proteins. The sequence is that of Membrane protein insertase YidC from Geobacter metallireducens (strain ATCC 53774 / DSM 7210 / GS-15).